We begin with the raw amino-acid sequence, 322 residues long: Eukaryotic translation initiation factor 3 subunit I (322 aa).

5 WD repeats span residues Gly-4 to Thr-43, Gly-46 to Ser-85, Met-141 to Asp-180, Asp-184 to Ser-223, and Gly-281 to Glu-322.

Belongs to the eIF-3 subunit I family. Component of the eukaryotic translation initiation factor 3 (eIF-3) complex. The eIF-3 complex interacts with pix.

It is found in the cytoplasm. Component of the eukaryotic translation initiation factor 3 (eIF-3) complex, which is involved in protein synthesis of a specialized repertoire of mRNAs and, together with other initiation factors, stimulates binding of mRNA and methionyl-tRNAi to the 40S ribosome. The eIF-3 complex specifically targets and initiates translation of a subset of mRNAs involved in cell proliferation. This chain is Eukaryotic translation initiation factor 3 subunit I, found in Drosophila yakuba (Fruit fly).